The sequence spans 781 residues: MWGLVRLLLAWLGGWGCMGRLAAPVPAWAGSRGHSGPTLLRTRRSWVWNQFFVIEEYSGPEPVLIGKLHSDVDRGEGRTKYLLTGEGAGTVFVIDEATGNIHVTKSLDREEKAQYVLLAQAVDRASNRPLEPPSEFIIKVQDINDNPPVFPLGPYHATVPEMSNVGTSVIQVTAHDADDPSYGNSAKLVYTVLDGLPFFSVDPQTGVVRTAIPNMDRETQEEFLVVIQAKDMGGHMGGLSGSTTVTVTLSDVNDNPPKFPQSLYQFSVVETAGPGTLVGRLKAQDPDLGDNALVAYSILNGEGSEVFSISTDSQGQDGLLTVRKPLDFETRRSYTFRVEATNTLIDPAYLRRGPFKDVASVRVTVQDAPEPPAFTQATYHLAVPENKAPGTLVGQISASDLDSPASPIRYSILPHSDPERCFSIEPEDGTIRTAVRLDREARVWHNLTILATELDSSAQSSRVQVAIQTLDENDNAPQLAEPYDIFVCDSAAPGQLIKVIRALDRDEVGNSSQVSLQGPVGPDANFTVRDNRDGSASLLLPSRPAPPRQAPYLIPIELWDWGQPALSSTATVTVSVCRCRPDGSMASCWPEAQLSPTGLSTGALLAIVTCMGTLLALVVLFVALRRQKQEALMVLEEEDVRENIITYDDEGGGEEDTEAFDITALQNPDGAAPPAAGPPVRRDVLPRTRAPRQPRPPGPADVVQLLALRLREADEDPSVPPYDSVQVYGYEGRGSSCGSLSSLGSGSEAGGVPGPAEPLDDWGPLFRTLAELYGAKEPPAP.

The N-terminal stretch at 1-22 is a signal peptide; that stretch reads MWGLVRLLLAWLGGWGCMGRLA. Positions 23–44 are excised as a propeptide; sequence APVPAWAGSRGHSGPTLLRTRR. The Extracellular portion of the chain corresponds to 45-603; it reads SWVWNQFFVI…LSPTGLSTGA (559 aa). Cadherin domains are found at residues 46–150, 151–259, 260–374, 375–479, and 479–592; these read WVWN…PPVF, PLGP…PPKF, PQSL…PPAF, TQAT…APQL, and LAEP…WPEA. N-linked (GlcNAc...) asparagine glycans are attached at residues N446, N510, and N525. The helical transmembrane segment at 604–624 threads the bilayer; sequence LLAIVTCMGTLLALVVLFVAL. At 625 to 781 the chain is on the cytoplasmic side; that stretch reads RRQKQEALMV…LYGAKEPPAP (157 aa). Disordered regions lie at residues 665–700 and 731–762; these read LQNP…PGPA and EGRG…LDDW. Positions 733–746 are enriched in low complexity; sequence RGSSCGSLSSLGSG.

Associates with alpha-, beta- and delta-catenins.

The protein resides in the cell membrane. Functionally, cadherins are calcium-dependent cell adhesion proteins. They preferentially interact with themselves in a homophilic manner in connecting cells; cadherins may thus contribute to the sorting of heterogeneous cell types. Cadherin-24 mediate strong cell-cell adhesion. The chain is Cadherin-24 (Cdh24) from Mus musculus (Mouse).